Here is a 1435-residue protein sequence, read N- to C-terminus: MGARASVLSGGKLDSWEKIRLRPGGRKKYKLKHIVWASRELGRFALNRDLLETAEGCVQIMKQLQPALTGTEELRSLFNTVATLYCVHQKIEVKDTKEAPEEVEKIQKNSQQEIQQAAKNEGNSNPVSQNYPIVQNAQGQMIHQAISPWTLNAWVKVVEEKAFSPEVIPMFSALSEGATPQDLNTMLNTVGGHQAAMQMLKDTINDEAAEWDRIHPQQAGPIPPGQIREPSGSDIAGTTSTLQEQIRWMTSNPPIPVGEIYKRWIILGLNKIVRMYSPVSILDIRQGPKEPFRDYVDRFFKTLRAEQATQEVKGWMTDTLLVQNANPDCKTILRALGPGATLEEMMTACQGVGGPSHKARVLAEAMSQASGAAAAAIMMQKSNFKGPRRIIKCFNCGKEGHLARNCRAPRKKGCWKCGKEGHQMKECTERQANFLRENLAFQQGEARKLSPEQDRANSPTSRELRIRRGDSPLPEAGAKGEGAISLNFPQITLWQRPLVTVKIGGQLIEALLDTGADDTVLEGINLPGKWKPKMIGGIGGFIKVRQYDQILIEIGGKKAIGTVLVGPTPINIIGRNMLTQIGCTLNFPISPIETVPVKLKPGMDGPRVKQWPLTEEKIKALTEICKDMEKEGKISKIGPENPYNTPIFAIKKKDSTKWRKLVDFRELNKRTQDFWEVQLGIPHPAGLKKKRSVTVLDVGDAYFSVPLDKDFRKYTAFTIPSINNETPGIRYQYNVLPQGWKGSPAIFQSSMTKILEPSRTKNPEMVIYQYMDDLYVGSDLEIGQHRAKIEELREHLLKWGLTTPDKKHQKEPPFLWMGYELHPDKWTVQPIQLPEKEDWTVNDIQKLVGKLNWASQIYPGIKVKHLCRLLRGAKALTDIVPLTAEAEMELAENREILKEPVHGVYHDPSKELIAEVQKQGPDQWTYQIYQEPYKNLKTGKYAKRGSAHTNDVKQLTEVVQKIATEGIVIWGKIPKFKLPIRKETWEVWWTEYWQAAWIPEWEFVNTPPLVKLWYQLETEPIPGAETYYVDGAANRETKLGKAGHVTDKGKQKIITLTETTNQKAELHAIQLALQDSRPEVNIVTDSQYALGIIQAQPDRSGSELVNQIIEQLIKKEKVYLSWVPAHKGIGGNEQVDKLVSSGIRKVLFLDGIDKAQEEHERYHSNWRAMASDFNLPPVVAKEIVASCDKCQLKGEAMHGQVDCSPGIWQLDCTHLEGKIIIVAVHVASGYIEAEVIPAETGQETAYFILKLAGRWPVKVIHTDNGPNFISAAVKAACWWANITQEFGIPYNPQSQGVVESMNKELKKIIGQVGDQAEHLKTAVQMAVFIHNFKRKGGIGGYSAGERIIDIIASDIQTKELQKQIIKIQNFRVYYRDSRDPIWKGPAKLLWKGEGAVVIQDNNEIKVVPRRKAKILKDYGKQMAGGDCVAGRQDED.

The N-myristoyl glycine; by host moiety is linked to residue glycine 2. The interaction with Gp41 stretch occupies residues 7-31 (VLSGGKLDSWEKIRLRPGGRKKYKL). The interval 8–43 (LSGGKLDSWEKIRLRPGGRKKYKLKHIVWASRELGR) is interaction with host CALM1. The interaction with host AP3D1 stretch occupies residues 12 to 19 (KLDSWEKI). Positions 14–33 (DSWEKIRLRPGGRKKYKLKH) are interaction with membrane phosphatidylinositol 4,5-bisphosphate and RNA. The Nuclear export signal motif lies at 16-22 (WEKIRLR). The Nuclear localization signal motif lies at 26–32 (RKKYKLK). Residues 72 to 76 (EELRS) form an interaction with membrane phosphatidylinositol 4,5-bisphosphate region. A disordered region spans residues 107 to 126 (QKNSQQEIQQAAKNEGNSNP). Residues 108-126 (KNSQQEIQQAAKNEGNSNP) are compositionally biased toward polar residues. A Phosphotyrosine; by host modification is found at tyrosine 131. Positions 188 to 226 (NTVGGHQAAMQMLKDTINDEAAEWDRIHPQQAGPIPPGQ) are interaction with human PPIA/CYPA and NUP153. The tract at residues 276–362 (YSPVSILDIR…GGPSHKARVL (87 aa)) is dimerization/Multimerization of capsid protein p24. 2 consecutive CCHC-type zinc fingers follow at residues 391–408 (IKCFNCGKEGHLARNCRA) and 412–429 (KGCWKCGKEGHQMKECTE). Residues 444 to 478 (GEARKLSPEQDRANSPTSRELRIRRGDSPLPEAGA) form a disordered region. The span at 445 to 455 (EARKLSPEQDR) shows a compositional bias: basic and acidic residues. The tract at residues 489–493 (PQITL) is dimerization of protease. The Peptidase A2 domain occupies 508 to 577 (IEALLDTGAD…TPINIIGRNM (70 aa)). Catalysis depends on aspartate 513, which acts as the For protease activity; shared with dimeric partner. Dimerization of protease regions lie at residues 537–543 (GIGGFIK) and 576–588 (NMLTQIGCTLNFP). Residues 631-821 (EGKISKIGPE…PPFLWMGYEL (191 aa)) form the Reverse transcriptase domain. Aspartate 697, aspartate 772, and aspartate 773 together coordinate Mg(2+). The tract at residues 814 to 822 (FLWMGYELH) is RT 'primer grip'. Positions 985 to 1001 (WEVWWTEYWQAAWIPEW) match the Tryptophan repeat motif motif. An RNase H type-1 domain is found at 1021-1144 (IPGAETYYVD…VDKLVSSGIR (124 aa)). Mg(2+)-binding residues include aspartate 1030, glutamate 1065, aspartate 1085, and aspartate 1136. The segment at 1150–1191 (DGIDKAQEEHERYHSNWRAMASDFNLPPVVAKEIVASCDKCQ) adopts an Integrase-type zinc-finger fold. 4 residues coordinate Zn(2+): histidine 1159, histidine 1163, cysteine 1187, and cysteine 1190. The Integrase catalytic domain occupies 1201–1351 (VDCSPGIWQL…SAGERIIDII (151 aa)). Positions 1211, 1263, and 1299 each coordinate Mg(2+). The integrase-type DNA-binding region spans 1370–1417 (FRVYYRDSRDPIWKGPAKLLWKGEGAVVIQDNNEIKVVPRRKAKILKD).

As to quaternary structure, homotrimer; further assembles as hexamers of trimers. Interacts with gp41 (via C-terminus). Interacts with host CALM1; this interaction induces a conformational change in the Matrix protein, triggering exposure of the myristate group. Interacts with host AP3D1; this interaction allows the polyprotein trafficking to multivesicular bodies during virus assembly. Part of the pre-integration complex (PIC) which is composed of viral genome, matrix protein, Vpr and integrase. In terms of assembly, homodimer; the homodimer further multimerizes as homohexamers or homopentamers. Interacts with human PPIA/CYPA; This interaction stabilizes the capsid. Interacts with human NUP153. Interacts with host PDZD8; this interaction stabilizes the capsid. Interacts with monkey TRIM5; this interaction destabilizes the capsid. Homodimer, whose active site consists of two apposed aspartic acid residues. As to quaternary structure, heterodimer of p66 RT and p51 RT (RT p66/p51). Heterodimerization of RT is essential for DNA polymerase activity. The overall folding of the subdomains is similar in p66 RT and p51 RT but the spatial arrangements of the subdomains are dramatically different. In terms of assembly, homotetramer; may further associate as a homohexadecamer. Part of the pre-integration complex (PIC) which is composed of viral genome, matrix protein, Vpr and integrase. Interacts with human SMARCB1/INI1 and human PSIP1/LEDGF isoform 1. Interacts with human KPNA3; this interaction might play a role in nuclear import of the pre-integration complex. Interacts with human NUP153; this interaction might play a role in nuclear import of the pre-integration complex. It depends on Mg(2+) as a cofactor. In terms of processing, specific enzymatic cleavages by the viral protease yield mature proteins. The protease is released by autocatalytic cleavage. The polyprotein is cleaved during and after budding, this process is termed maturation. Proteolytic cleavage of p66 RT removes the RNase H domain to yield the p51 RT subunit. Nucleocapsid protein p7 might be further cleaved after virus entry. Tyrosine phosphorylated presumably in the virion by a host kinase. Phosphorylation is apparently not a major regulator of membrane association. Post-translationally, phosphorylated possibly by host MAPK1; this phosphorylation is necessary for Pin1-mediated virion uncoating. In terms of processing, methylated by host PRMT6, impairing its function by reducing RNA annealing and the initiation of reverse transcription.

The protein localises to the host cell membrane. Its subcellular location is the host endosome. It is found in the host multivesicular body. The protein resides in the virion membrane. It localises to the host nucleus. The protein localises to the host cytoplasm. Its subcellular location is the virion. It catalyses the reaction Specific for a P1 residue that is hydrophobic, and P1' variable, but often Pro.. The enzyme catalyses Endohydrolysis of RNA in RNA/DNA hybrids. Three different cleavage modes: 1. sequence-specific internal cleavage of RNA. Human immunodeficiency virus type 1 and Moloney murine leukemia virus enzymes prefer to cleave the RNA strand one nucleotide away from the RNA-DNA junction. 2. RNA 5'-end directed cleavage 13-19 nucleotides from the RNA end. 3. DNA 3'-end directed cleavage 15-20 nucleotides away from the primer terminus.. The catalysed reaction is 3'-end directed exonucleolytic cleavage of viral RNA-DNA hybrid.. It carries out the reaction DNA(n) + a 2'-deoxyribonucleoside 5'-triphosphate = DNA(n+1) + diphosphate. Protease: The viral protease is inhibited by many synthetic protease inhibitors (PIs), such as amprenavir, atazanavir, indinavir, loprinavir, nelfinavir, ritonavir and saquinavir. Use of protease inhibitors in tritherapy regimens permit more ambitious therapeutic strategies. Reverse transcriptase/ribonuclease H: RT can be inhibited either by nucleoside RT inhibitors (NRTIs) or by non nucleoside RT inhibitors (NNRTIs). NRTIs act as chain terminators, whereas NNRTIs inhibit DNA polymerization by binding a small hydrophobic pocket near the RT active site and inducing an allosteric change in this region. Classical NRTIs are abacavir, adefovir (PMEA), didanosine (ddI), lamivudine (3TC), stavudine (d4T), tenofovir (PMPA), zalcitabine (ddC), and zidovudine (AZT). Classical NNRTIs are atevirdine (BHAP U-87201E), delavirdine, efavirenz (DMP-266), emivirine (I-EBU), and nevirapine (BI-RG-587). The tritherapies used as a basic effective treatment of AIDS associate two NRTIs and one NNRTI. Mediates, with Gag polyprotein, the essential events in virion assembly, including binding the plasma membrane, making the protein-protein interactions necessary to create spherical particles, recruiting the viral Env proteins, and packaging the genomic RNA via direct interactions with the RNA packaging sequence (Psi). Gag-Pol polyprotein may regulate its own translation, by the binding genomic RNA in the 5'-UTR. At low concentration, the polyprotein would promote translation, whereas at high concentration, the polyprotein would encapsidate genomic RNA and then shut off translation. In terms of biological role, targets the polyprotein to the plasma membrane via a multipartite membrane-binding signal, that includes its myristoylated N-terminus. Matrix protein is part of the pre-integration complex. Implicated in the release from host cell mediated by Vpu. Binds to RNA. Its function is as follows. Forms the conical core that encapsulates the genomic RNA-nucleocapsid complex in the virion. Most core are conical, with only 7% tubular. The core is constituted by capsid protein hexamer subunits. The core is disassembled soon after virion entry. Host restriction factors such as TRIM5-alpha or TRIMCyp bind retroviral capsids and cause premature capsid disassembly, leading to blocks in reverse transcription. Capsid restriction by TRIM5 is one of the factors which restricts HIV-1 to the human species. Host PIN1 apparently facilitates the virion uncoating. On the other hand, interactions with PDZD8 or CYPA stabilize the capsid. Functionally, encapsulates and protects viral dimeric unspliced genomic RNA (gRNA). Binds these RNAs through its zinc fingers. Acts as a nucleic acid chaperone which is involved in rearangement of nucleic acid secondary structure during gRNA retrotranscription. Also facilitates template switch leading to recombination. As part of the polyprotein, participates in gRNA dimerization, packaging, tRNA incorporation and virion assembly. Aspartyl protease that mediates proteolytic cleavages of Gag and Gag-Pol polyproteins during or shortly after the release of the virion from the plasma membrane. Cleavages take place as an ordered, step-wise cascade to yield mature proteins. This process is called maturation. Displays maximal activity during the budding process just prior to particle release from the cell. Also cleaves Nef and Vif, probably concomitantly with viral structural proteins on maturation of virus particles. Hydrolyzes host EIF4GI and PABP1 in order to shut off the capped cellular mRNA translation. The resulting inhibition of cellular protein synthesis serves to ensure maximal viral gene expression and to evade host immune response. Also mediates cleavage of host YTHDF3. Mediates cleavage of host CARD8, thereby activating the CARD8 inflammasome, leading to the clearance of latent HIV-1 in patient CD4(+) T-cells after viral reactivation; in contrast, HIV-1 can evade CARD8-sensing when its protease remains inactive in infected cells prior to viral budding. In terms of biological role, multifunctional enzyme that converts the viral RNA genome into dsDNA in the cytoplasm, shortly after virus entry into the cell. This enzyme displays a DNA polymerase activity that can copy either DNA or RNA templates, and a ribonuclease H (RNase H) activity that cleaves the RNA strand of RNA-DNA heteroduplexes in a partially processive 3' to 5' endonucleasic mode. Conversion of viral genomic RNA into dsDNA requires many steps. A tRNA(3)-Lys binds to the primer-binding site (PBS) situated at the 5'-end of the viral RNA. RT uses the 3' end of the tRNA primer to perform a short round of RNA-dependent minus-strand DNA synthesis. The reading proceeds through the U5 region and ends after the repeated (R) region which is present at both ends of viral RNA. The portion of the RNA-DNA heteroduplex is digested by the RNase H, resulting in a ssDNA product attached to the tRNA primer. This ssDNA/tRNA hybridizes with the identical R region situated at the 3' end of viral RNA. This template exchange, known as minus-strand DNA strong stop transfer, can be either intra- or intermolecular. RT uses the 3' end of this newly synthesized short ssDNA to perform the RNA-dependent minus-strand DNA synthesis of the whole template. RNase H digests the RNA template except for two polypurine tracts (PPTs) situated at the 5'-end and near the center of the genome. It is not clear if both polymerase and RNase H activities are simultaneous. RNase H probably can proceed both in a polymerase-dependent (RNA cut into small fragments by the same RT performing DNA synthesis) and a polymerase-independent mode (cleavage of remaining RNA fragments by free RTs). Secondly, RT performs DNA-directed plus-strand DNA synthesis using the PPTs that have not been removed by RNase H as primers. PPTs and tRNA primers are then removed by RNase H. The 3' and 5' ssDNA PBS regions hybridize to form a circular dsDNA intermediate. Strand displacement synthesis by RT to the PBS and PPT ends produces a blunt ended, linear dsDNA copy of the viral genome that includes long terminal repeats (LTRs) at both ends. Its function is as follows. Catalyzes viral DNA integration into the host chromosome, by performing a series of DNA cutting and joining reactions. This enzyme activity takes place after virion entry into a cell and reverse transcription of the RNA genome in dsDNA. The first step in the integration process is 3' processing. This step requires a complex comprising the viral genome, matrix protein, Vpr and integrase. This complex is called the pre-integration complex (PIC). The integrase protein removes 2 nucleotides from each 3' end of the viral DNA, leaving recessed CA OH's at the 3' ends. In the second step, the PIC enters cell nucleus. This process is mediated through integrase and Vpr proteins, and allows the virus to infect a non dividing cell. This ability to enter the nucleus is specific of lentiviruses, other retroviruses cannot and rely on cell division to access cell chromosomes. In the third step, termed strand transfer, the integrase protein joins the previously processed 3' ends to the 5' ends of strands of target cellular DNA at the site of integration. The 5'-ends are produced by integrase-catalyzed staggered cuts, 5 bp apart. A Y-shaped, gapped, recombination intermediate results, with the 5'-ends of the viral DNA strands and the 3' ends of target DNA strands remaining unjoined, flanking a gap of 5 bp. The last step is viral DNA integration into host chromosome. This involves host DNA repair synthesis in which the 5 bp gaps between the unjoined strands are filled in and then ligated. Since this process occurs at both cuts flanking the HIV genome, a 5 bp duplication of host DNA is produced at the ends of HIV-1 integration. Alternatively, Integrase may catalyze the excision of viral DNA just after strand transfer, this is termed disintegration. This is Gag-Pol polyprotein (gag-pol) from Human immunodeficiency virus type 1 group M subtype G (isolate 92NG083) (HIV-1).